A 330-amino-acid chain; its full sequence is Phenylalanine--tRNA ligase alpha subunit (330 aa).

E246 contacts Mg(2+).

It belongs to the class-II aminoacyl-tRNA synthetase family. Phe-tRNA synthetase alpha subunit type 1 subfamily. In terms of assembly, tetramer of two alpha and two beta subunits. Requires Mg(2+) as cofactor.

It localises to the cytoplasm. It carries out the reaction tRNA(Phe) + L-phenylalanine + ATP = L-phenylalanyl-tRNA(Phe) + AMP + diphosphate + H(+). The chain is Phenylalanine--tRNA ligase alpha subunit from Sulfurimonas denitrificans (strain ATCC 33889 / DSM 1251) (Thiomicrospira denitrificans (strain ATCC 33889 / DSM 1251)).